Here is a 490-residue protein sequence, read N- to C-terminus: Tektin-3 (490 aa).

3 O-linked (GalNAc...) threonine glycosylation sites follow: T7, T9, and T10. 6 N-linked (GlcNAc...) asparagine glycosylation sites follow: N41, N86, N103, N111, N276, and N344. The stretch at 424 to 451 forms a coiled coil; that stretch reads VHEVDDTIQTLQQRLRDAEDTLQSLVHI.

It belongs to the tektin family. Microtubule inner protein component of sperm flagellar doublet microtubules. Interacts with TEKT1, TEKT2, TEKT4 and TEKT5. Interacts with CCDC38. N- and O-glycosylated. In terms of processing, may be proteolytically processed during the epididymal transit of spermatozoa. Post-translationally, ubiquitinated, leading to its degradation. Deubiquitinated by USP16, promoting its stability. As to expression, expressed in spermatozoa. Expressed in airway epithelial cells.

Its subcellular location is the cytoplasm. It localises to the cytoskeleton. The protein resides in the cilium axoneme. It is found in the flagellum axoneme. The protein localises to the cytoplasmic vesicle. Its subcellular location is the secretory vesicle. It localises to the acrosome outer membrane. In terms of biological role, microtubule inner protein (MIP) part of the dynein-decorated doublet microtubules (DMTs) in cilia and flagellar axoneme. Forms filamentous polymers in the walls of ciliary and flagellar microtubules. Required for normal sperm mobility. This chain is Tektin-3 (TEKT3), found in Homo sapiens (Human).